The primary structure comprises 351 residues: Phosphoribosylformylglycinamidine cyclo-ligase (351 aa).

The protein belongs to the AIR synthase family.

Its subcellular location is the cytoplasm. It carries out the reaction 2-formamido-N(1)-(5-O-phospho-beta-D-ribosyl)acetamidine + ATP = 5-amino-1-(5-phospho-beta-D-ribosyl)imidazole + ADP + phosphate + H(+). It functions in the pathway purine metabolism; IMP biosynthesis via de novo pathway; 5-amino-1-(5-phospho-D-ribosyl)imidazole from N(2)-formyl-N(1)-(5-phospho-D-ribosyl)glycinamide: step 2/2. This is Phosphoribosylformylglycinamidine cyclo-ligase from Xylella fastidiosa (strain Temecula1 / ATCC 700964).